We begin with the raw amino-acid sequence, 732 residues long: Elongation factor 2 (732 aa).

The region spanning E19 to I260 is the tr-type G domain. GTP is bound by residues A28–T35, D94–H98, and N148–D151. H597 is subject to Diphthamide.

Belongs to the TRAFAC class translation factor GTPase superfamily. Classic translation factor GTPase family. EF-G/EF-2 subfamily.

The protein resides in the cytoplasm. Its function is as follows. Catalyzes the GTP-dependent ribosomal translocation step during translation elongation. During this step, the ribosome changes from the pre-translocational (PRE) to the post-translocational (POST) state as the newly formed A-site-bound peptidyl-tRNA and P-site-bound deacylated tRNA move to the P and E sites, respectively. Catalyzes the coordinated movement of the two tRNA molecules, the mRNA and conformational changes in the ribosome. In Pyrococcus horikoshii (strain ATCC 700860 / DSM 12428 / JCM 9974 / NBRC 100139 / OT-3), this protein is Elongation factor 2 (fusA).